A 567-amino-acid polypeptide reads, in one-letter code: R-linalool synthase QH1, chloroplastic (567 aa).

A chloroplast-targeting transit peptide spans 1 to 24 (GNAYMRIYSTKTTRITANATVNAA). Positions 282, 319, 323, 460, and 463 each coordinate (2E)-geranyl diphosphate. Asp-319 and Asp-323 together coordinate Mg(2+). The DDXXD motif signature appears at 319-323 (DDVYD). Mg(2+) is bound by residues Asp-463, Thr-467, and Glu-471.

It belongs to the terpene synthase family. Tpsb subfamily. Requires Mg(2+) as cofactor. In terms of tissue distribution, highly expressed in leaves and lower levels in inflorescences. Not detected in stems, stem epidermis, stem stele or roots.

Its subcellular location is the plastid. It localises to the chloroplast. It catalyses the reaction (2E)-geranyl diphosphate + H2O = (R)-linalool + diphosphate. Its pathway is secondary metabolite biosynthesis; terpenoid biosynthesis. In terms of biological role, monoterpene synthase that catalyzes the formation of (3R)-linalool from geranyl diphosphate, but not from isopentenyl diphosphate, dimethylallyl diphosphate, chrysanthemyl diphosphate, farnesyl diphosphate, (+)-copalyl diphosphate or geranylgeranyl diphosphate. This is R-linalool synthase QH1, chloroplastic (QH1) from Artemisia annua (Sweet wormwood).